Here is a 46-residue protein sequence, read N- to C-terminus: Light-harvesting protein B-800/850 beta 2 chain (46 aa).

Residues 2 to 25 (AERSLSGLTEEEAVAVHAQFQTTF) lie on the Cytoplasmic side of the membrane. A bacteriochlorophyll-binding residues include His-18 and His-36. The helical transmembrane segment at 26–46 (SAFIVLAAVAHVLVWVWKPWF) threads the bilayer.

The protein belongs to the antenna complex beta subunit family. As to quaternary structure, the core complex is formed by different alpha and beta chains, binding bacteriochlorophyll molecules, and arranged most probably in tetrameric structures disposed around the reaction center.

It is found in the cell inner membrane. Functionally, antenna complexes are light-harvesting systems, which transfer the excitation energy to the reaction centers. This chain is Light-harvesting protein B-800/850 beta 2 chain (B2), found in Magnetospirillum molischianum (Rhodospirillum molischianum).